The chain runs to 653 residues: 2-oxoglutarate oxidoreductase subunit KorA (653 aa).

A disordered region spans residues 1 to 21 (MDPNGSGAGPESHDAAFHAAP). Residues 11–21 (ESHDAAFHAAP) show a composition bias toward basic and acidic residues.

In terms of assembly, KG oxidoreductase (KOR) is composed of KorA and KorB subunits.

It carries out the reaction 2 oxidized [2Fe-2S]-[ferredoxin] + 2-oxoglutarate + CoA = succinyl-CoA + 2 reduced [2Fe-2S]-[ferredoxin] + CO2 + H(+). Its pathway is carbohydrate metabolism; tricarboxylic acid cycle. Component of KG oxidoreductase (KOR) that catalyzes the CoA-dependent oxidative decarboxylation of 2-oxoglutarate (alpha-ketoglutarate, KG) to succinyl-CoA. Methyl viologen can act as electron acceptor in vitro; the physiologic electron acceptor is unknown. Is involved in the alternative TCA pathway that functions concurrently with fatty acid beta-oxidation. Since a growing body of evidence indicates that lipids (for example cholesterol and fatty acids) are a predominant growth substrate for M.tuberculosis during infection, flux through KOR likely represents an important step in intermediary metabolism in vivo. KOR-dependent decarboxylation of KG also appears to be an important source of CO(2) in M.tuberculosis metabolism. This Mycobacterium tuberculosis (strain ATCC 25618 / H37Rv) protein is 2-oxoglutarate oxidoreductase subunit KorA (korA).